The following is a 238-amino-acid chain: Ribonuclease PH (238 aa).

Residues arginine 86 and glycine 124–arginine 126 contribute to the phosphate site.

The protein belongs to the RNase PH family. In terms of assembly, homohexameric ring arranged as a trimer of dimers.

It catalyses the reaction tRNA(n+1) + phosphate = tRNA(n) + a ribonucleoside 5'-diphosphate. Phosphorolytic 3'-5' exoribonuclease that plays an important role in tRNA 3'-end maturation. Removes nucleotide residues following the 3'-CCA terminus of tRNAs; can also add nucleotides to the ends of RNA molecules by using nucleoside diphosphates as substrates, but this may not be physiologically important. Probably plays a role in initiation of 16S rRNA degradation (leading to ribosome degradation) during starvation. This is Ribonuclease PH from Actinobacillus pleuropneumoniae serotype 7 (strain AP76).